The sequence spans 358 residues: F-box protein At4g35733 (358 aa).

The 48-residue stretch at 4–51 folds into the F-box domain; that stretch reads ATVWSDLPGELLDHIANGLFSKVELLRFRSICKTFRSAVDSDKNFLDH.

In terms of assembly, part of a SCF (ASK-cullin-F-box) protein ligase complex.

Its pathway is protein modification; protein ubiquitination. Functionally, component of SCF(ASK-cullin-F-box) E3 ubiquitin ligase complexes, which may mediate the ubiquitination and subsequent proteasomal degradation of target proteins. This Arabidopsis thaliana (Mouse-ear cress) protein is F-box protein At4g35733.